Reading from the N-terminus, the 106-residue chain is Large ribosomal subunit protein bL21 (106 aa).

The protein belongs to the bacterial ribosomal protein bL21 family. In terms of assembly, part of the 50S ribosomal subunit. Contacts protein L20.

In terms of biological role, this protein binds to 23S rRNA in the presence of protein L20. The chain is Large ribosomal subunit protein bL21 from Chlamydia felis (strain Fe/C-56) (Chlamydophila felis).